The sequence spans 659 residues: Putative pentatricopeptide repeat-containing protein At3g16890, mitochondrial (659 aa).

A mitochondrion-targeting transit peptide spans 1–32 (MRGFASSASRIATAAAASKSLNASTSVNPKLS). PPR repeat units follow at residues 109–143 (DQSLKSVLGNALFRKGPLLLSMELLKEIRDSGYRI), 144–178 (SDELMCVLIGSWGRLGLAKYCNDVFAQISFLGMKP), 179–213 (STRLYNAVIDALVKSNSLDLAYLKFQQMRSDGCKP), 214–248 (DRFTYNILIHGVCKKGVVDEAIRLVKQMEQEGNRP), 249–283 (NVFTYTILIDGFLIAGRVDEALKQLEMMRVRKLNP), 284–318 (NEATIRTFVHGIFRCLPPCKAFEVLVGFMEKDSNL), 319–353 (QRVGYDAVLYCLSNNSMAKETGQFLRKIGERGYIP), 354–388 (DSSTFNAAMSCLLKGHDLVETCRIFDGFVSRGVKP), 389–423 (GFNGYLVLVQALLNAQRFSEGDRYLKQMGVDGLLS), 424–458 (SVYSYNAVIDCLCKARRIENAAMFLTEMQDRGISP), 459–493 (NLVTFNTFLSGYSVRGDVKKVHGVLEKLLVHGFKP), 494–528 (DVITFSLIINCLCRAKEIKDAFDCFKEMLEWGIEP), 529–563 (NEITYNILIRSCCSTGDTDRSVKLFAKMKENGLSP), 564–598 (DLYAYNATIQSFCKMRKVKKAEELLKTMLRIGLKP), and 599–633 (DNFTYSTLIKALSESGRESEAREMFSSIERHGCVP).

The protein belongs to the PPR family. P subfamily.

It localises to the mitochondrion. Functionally, required for the ubiquinol-cytochrome c oxidoreductase activity of mitochondrial complex III. In Arabidopsis thaliana (Mouse-ear cress), this protein is Putative pentatricopeptide repeat-containing protein At3g16890, mitochondrial (PPR40).